Reading from the N-terminus, the 404-residue chain is Cystinosin homolog (404 aa).

At 20–123 the chain is on the lumenal side; that stretch reads TNNLVVRQKE…FARITVIRSH (104 aa). 4 N-linked (GlcNAc...) asparagine glycosylation sites follow: Asn46, Asn53, Asn79, and Asn97. Residues 124-144 traverse the membrane as a helical segment; that stretch reads FLAILIQIVGWTYFFAWSISF. Residues 125–191 enclose the PQ-loop 1 domain; it reads LAILIQIVGW…MYYNSHVKNE (67 aa). At 145–163 the chain is on the cytoplasmic side; sequence YPQMYLNFKRKSVVGLNFD. Residues 164–184 form a helical membrane-spanning segment; sequence FLSLNLVGFCAYAIFNLLMYY. At 185 to 207 the chain is on the lumenal side; the sequence is NSHVKNEYNIVNPRSPPPVLLND. A helical transmembrane segment spans residues 208 to 228; the sequence is VVFAVHAFLACFITILQCLFY. Residues 229 to 238 are Cytoplasmic-facing; the sequence is ERDNQSVSSK. Residues 239 to 259 traverse the membrane as a helical segment; sequence CIALMIVLISFGFCSAAATVL. The Lumenal segment spans residues 260 to 263; it reads RKIQ. Residues 264 to 285 traverse the membrane as a helical segment; the sequence is LLSFVTSLSYIKMAVTCCKYFP. In terms of domain architecture, PQ-loop 2 spans 266–327; sequence SFVTSLSYIK…MILQAVNVND (62 aa). Residues 286–295 lie on the Cytoplasmic side of the membrane; the sequence is QAYFNYTRKS. Residues 296-316 traverse the membrane as a helical segment; sequence TVGWSIGNIMLDFTGGTLDIL. At 317 to 337 the chain is on the lumenal side; that stretch reads QMILQAVNVNDWSAFYANPVK. A helical membrane pass occupies residues 338–358; sequence FGLGFVSIFFDIIFMVQHYVL. Residues 359–404 lie on the Cytoplasmic side of the membrane; the sequence is YPNAEVPHNEYHGVDNPNPDNIARDAEQYAGDSESMESTEPIIVHD.

The protein belongs to the cystinosin family.

The protein localises to the lysosome membrane. It localises to the cytoplasmic vesicle. The protein resides in the phagosome. The enzyme catalyses L-cystine(out) + H(+)(out) = L-cystine(in) + H(+)(in). Functionally, cystine/H(+) symporter that mediates export of cystine, the oxidized dimer of cysteine, from lysosomes. May play a role in the degradation of engulfed apoptotic cells. This Caenorhabditis elegans protein is Cystinosin homolog (ctns-1).